The chain runs to 382 residues: MKNAVHFGAGNIGRGFIGKLLADANVAVTFADVDAPLVDQLSHKQEYKVKVVGSECQIDTVTHVTAVNSASEEVIDRIVQTDLVTTAVGPNVLDIIAKTIAQGIAKRFAAGNLAPLNIIACENMVRGTTHLKGEVYKHLDASLHAQADELVGFVDSAVDRIVPPAEAANDDPLEVTVESFSEWIVDEQQFKGEVPSIAGMEKTHNLMAFVERKLFTLNTGHCITAYLGCLQGHRTIREAIENPAIRDQVKQAMMESGEVLIRRYGFDREMHQAYIEKILARFANPFLVDEVDRVGRQPIRKLGMNDRLIKPLLGTIEFGTANQHLLKGIAAALKYQNDSDPQAVELQRSLQQVGVKKTLAKYTSLAEDSVEVAKIETLYNQL.

Position 4–15 (Ala4–Gly15) interacts with NAD(+).

It belongs to the mannitol dehydrogenase family.

The catalysed reaction is D-mannitol 1-phosphate + NAD(+) = beta-D-fructose 6-phosphate + NADH + H(+). In Vibrio vulnificus (strain CMCP6), this protein is Mannitol-1-phosphate 5-dehydrogenase.